The following is a 177-amino-acid chain: Large ribosomal subunit protein uL6 (177 aa).

This sequence belongs to the universal ribosomal protein uL6 family. In terms of assembly, part of the 50S ribosomal subunit.

This protein binds to the 23S rRNA, and is important in its secondary structure. It is located near the subunit interface in the base of the L7/L12 stalk, and near the tRNA binding site of the peptidyltransferase center. In Stutzerimonas stutzeri (strain A1501) (Pseudomonas stutzeri), this protein is Large ribosomal subunit protein uL6.